The chain runs to 624 residues: Chaperone protein HtpG (624 aa).

The segment at 1–336 (MKGQETRGFQ…SSDLSLNVSR (336 aa)) is a; substrate-binding. Residues 337–552 (EILQDSTVTR…ADEMSTQMAK (216 aa)) are b. A c region spans residues 553–624 (LFAAAGQKVP…IRRMNQLLVS (72 aa)).

It belongs to the heat shock protein 90 family. Homodimer.

The protein resides in the cytoplasm. Molecular chaperone. Has ATPase activity. The protein is Chaperone protein HtpG of Shigella dysenteriae serotype 1 (strain Sd197).